A 132-amino-acid chain; its full sequence is Small ribosomal subunit protein uS8 (132 aa).

This sequence belongs to the universal ribosomal protein uS8 family. In terms of assembly, part of the 30S ribosomal subunit. Contacts proteins S5 and S12.

Functionally, one of the primary rRNA binding proteins, it binds directly to 16S rRNA central domain where it helps coordinate assembly of the platform of the 30S subunit. The chain is Small ribosomal subunit protein uS8 from Methylocella silvestris (strain DSM 15510 / CIP 108128 / LMG 27833 / NCIMB 13906 / BL2).